The sequence spans 785 residues: Phenylalanine--tRNA ligase beta subunit (785 aa).

The region spanning 39–147 (FPIPRGVVFA…DALPPGTPLS (109 aa)) is the tRNA-binding domain. The B5 domain maps to 399–474 (KPPEAIPFRP…RIQGYETIPL (76 aa)). Mg(2+)-binding residues include D452, D458, E461, and E462. Residues 688 to 780 (SRHPAAFRDL…ALRARGFGLR (93 aa)) enclose the FDX-ACB domain.

This sequence belongs to the phenylalanyl-tRNA synthetase beta subunit family. Type 1 subfamily. In terms of assembly, tetramer of two alpha and two beta subunits. Requires Mg(2+) as cofactor.

The protein localises to the cytoplasm. The enzyme catalyses tRNA(Phe) + L-phenylalanine + ATP = L-phenylalanyl-tRNA(Phe) + AMP + diphosphate + H(+). The polypeptide is Phenylalanine--tRNA ligase beta subunit (pheT) (Thermus thermophilus (strain ATCC 27634 / DSM 579 / HB8)).